The following is a 120-amino-acid chain: Ribosome-binding factor A (120 aa).

Belongs to the RbfA family. In terms of assembly, monomer. Binds 30S ribosomal subunits, but not 50S ribosomal subunits or 70S ribosomes.

The protein localises to the cytoplasm. One of several proteins that assist in the late maturation steps of the functional core of the 30S ribosomal subunit. Associates with free 30S ribosomal subunits (but not with 30S subunits that are part of 70S ribosomes or polysomes). Required for efficient processing of 16S rRNA. May interact with the 5'-terminal helix region of 16S rRNA. This is Ribosome-binding factor A from Campylobacter jejuni subsp. jejuni serotype O:6 (strain 81116 / NCTC 11828).